Consider the following 392-residue polypeptide: MATRRAAIAREVDNAVGAMRSKAQLNGRRAALGEIGNKVTVRAVKQPAKNSNTTSKTTRPVAKVSNVSVKPKAVTVTEAPSQVKEASPVPMDVSMKEEEELCQAFSEVLNHVVDIDAEDGGNPQLCSEYVVDIYNYLREREVQQSIKQRYLDGMEINERMRAILVDWLIQVNSRFQFLQETLYMGIAIMDRFLQVQPISRGKLQLVGVTSLLLASKYEEMYSPEVADFAYITDNAYTTSQIREMEMIILRELKFDLGRPLPLHFLRRASKACSADAEQHTLAKYLMELTLVDYEMVHFHPSEIAAAALCLAQKVLGVGSWGSTQHHYTGYTEEDLTPIIKHIAKNVTKVNQNRTKHVAVRNKYASSKLMKISTHPQLMSLVITELAASLTSQ.

Belongs to the cyclin family. Cyclin AB subfamily. In terms of assembly, interacts with the CDK1 protein kinase to form a serine/threonine kinase holoenzyme complex also known as maturation promoting factor (MPF). The cyclin subunit imparts substrate specificity to the complex.

Functionally, essential for the control of the cell cycle at the G2/M (mitosis) transition. The protein is G2/mitotic-specific cyclin-B2 (CCNB2) of Rana japonica (Japanese reddish frog).